Here is a 129-residue protein sequence, read N- to C-terminus: Histone H2A.J (129 aa).

Residues 1–22 (MSGRGKQGGKVRAKAKSRSSRA) form a disordered region. N6-acetyllysine is present on residues Lys6 and Lys10. The segment covering 7–19 (QGGKVRAKAKSRS) has biased composition (basic residues). An N6-lactoyllysine; alternate modification is found at Lys10. Gln105 carries the N5-methylglutamine modification. Thr121 is modified (phosphothreonine; by DCAF1).

Belongs to the histone H2A family. As to quaternary structure, the nucleosome is a histone octamer containing two molecules each of H2A, H2B, H3 and H4 assembled in one H3-H4 heterotetramer and two H2A-H2B heterodimers. The octamer wraps approximately 147 bp of DNA. In terms of processing, monoubiquitination of Lys-120 (H2AXK119ub) gives a specific tag for epigenetic transcriptional repression. Following DNA double-strand breaks (DSBs), it is ubiquitinated through 'Lys-63' linkage of ubiquitin moieties. Post-translationally, glutamine methylation at Gln-105 (H2AQ104me) by FBL is specifically dedicated to polymerase I. It is present at 35S ribosomal DNA locus and impairs binding of the FACT complex. Phosphorylation on Ser-2 (H2AS1ph) is enhanced during mitosis. Phosphorylation on Ser-2 by RPS6KA5/MSK1 directly represses transcription. Acetylation of H3 inhibits Ser-2 phosphorylation by RPS6KA5/MSK1. Phosphorylation at Thr-121 (H2AT120ph) by DCAF1 is present in the regulatory region of many tumor suppresor genes and down-regulates their transcription.

It localises to the nucleus. Its subcellular location is the chromosome. Core component of nucleosome. Nucleosomes wrap and compact DNA into chromatin, limiting DNA accessibility to the cellular machineries which require DNA as a template. Histones thereby play a central role in transcription regulation, DNA repair, DNA replication and chromosomal stability. DNA accessibility is regulated via a complex set of post-translational modifications of histones, also called histone code, and nucleosome remodeling. In Macaca fascicularis (Crab-eating macaque), this protein is Histone H2A.J.